Consider the following 304-residue polypeptide: Porphobilinogen deaminase (304 aa).

Cys-239 is modified (S-(dipyrrolylmethanemethyl)cysteine).

The protein belongs to the HMBS family. In terms of assembly, monomer. It depends on dipyrromethane as a cofactor.

It carries out the reaction 4 porphobilinogen + H2O = hydroxymethylbilane + 4 NH4(+). Its pathway is porphyrin-containing compound metabolism; protoporphyrin-IX biosynthesis; coproporphyrinogen-III from 5-aminolevulinate: step 2/4. Tetrapolymerization of the monopyrrole PBG into the hydroxymethylbilane pre-uroporphyrinogen in several discrete steps. The polypeptide is Porphobilinogen deaminase (Brucella ovis (strain ATCC 25840 / 63/290 / NCTC 10512)).